The following is a 210-amino-acid chain: Orotate phosphoribosyltransferase (210 aa).

Residues arginine 96, lysine 100, histidine 102, and 122 to 130 contribute to the 5-phospho-alpha-D-ribose 1-diphosphate site; that span reads DDLISTGGS. Residue serine 126 participates in orotate binding.

The protein belongs to the purine/pyrimidine phosphoribosyltransferase family. PyrE subfamily. In terms of assembly, homodimer. The cofactor is Mg(2+).

The enzyme catalyses orotidine 5'-phosphate + diphosphate = orotate + 5-phospho-alpha-D-ribose 1-diphosphate. Its pathway is pyrimidine metabolism; UMP biosynthesis via de novo pathway; UMP from orotate: step 1/2. In terms of biological role, catalyzes the transfer of a ribosyl phosphate group from 5-phosphoribose 1-diphosphate to orotate, leading to the formation of orotidine monophosphate (OMP). This chain is Orotate phosphoribosyltransferase, found in Levilactobacillus brevis (strain ATCC 367 / BCRC 12310 / CIP 105137 / JCM 1170 / LMG 11437 / NCIMB 947 / NCTC 947) (Lactobacillus brevis).